The primary structure comprises 72 residues: Translation initiation factor IF-1 (72 aa).

The region spanning 1-72 (MAKEEQIELE…TKGRITFRMK (72 aa)) is the S1-like domain.

It belongs to the IF-1 family. Component of the 30S ribosomal translation pre-initiation complex which assembles on the 30S ribosome in the order IF-2 and IF-3, IF-1 and N-formylmethionyl-tRNA(fMet); mRNA recruitment can occur at any time during PIC assembly.

It localises to the cytoplasm. In terms of biological role, one of the essential components for the initiation of protein synthesis. Stabilizes the binding of IF-2 and IF-3 on the 30S subunit to which N-formylmethionyl-tRNA(fMet) subsequently binds. Helps modulate mRNA selection, yielding the 30S pre-initiation complex (PIC). Upon addition of the 50S ribosomal subunit IF-1, IF-2 and IF-3 are released leaving the mature 70S translation initiation complex. The polypeptide is Translation initiation factor IF-1 (Alcanivorax borkumensis (strain ATCC 700651 / DSM 11573 / NCIMB 13689 / SK2)).